A 307-amino-acid chain; its full sequence is UDP-N-acetylenolpyruvoylglucosamine reductase (307 aa).

The region spanning 34-197 is the FAD-binding PCMH-type domain; sequence VGGNAEALFR…LSASLKGRPG (164 aa). Arginine 177 is a catalytic residue. The active-site Proton donor is serine 226. Residue glutamate 296 is part of the active site.

This sequence belongs to the MurB family. Requires FAD as cofactor.

It is found in the cytoplasm. It carries out the reaction UDP-N-acetyl-alpha-D-muramate + NADP(+) = UDP-N-acetyl-3-O-(1-carboxyvinyl)-alpha-D-glucosamine + NADPH + H(+). It functions in the pathway cell wall biogenesis; peptidoglycan biosynthesis. Its function is as follows. Cell wall formation. The chain is UDP-N-acetylenolpyruvoylglucosamine reductase from Paramagnetospirillum magneticum (strain ATCC 700264 / AMB-1) (Magnetospirillum magneticum).